A 134-amino-acid polypeptide reads, in one-letter code: MTNIRKTHPLLKIINNSLVDLPAPSNLSSWWNFGSLLGVCLAVQILTGVFLAMHYTSDTTSAFNSVAHICRDVNYGWVLRYLHANGASMFFICLYVHVGRGLYYGSYMYSETWNVGILLLFAVMATAFMGYVLP.

The next 3 membrane-spanning stretches (helical) occupy residues 33–53 (FGSL…FLAM), 77–98 (WVLR…YVHV), and 113–133 (WNVG…GYVL). 2 residues coordinate heme b: H83 and H97.

Belongs to the cytochrome b family. The cytochrome bc1 complex contains 11 subunits: 3 respiratory subunits (MT-CYB, CYC1 and UQCRFS1), 2 core proteins (UQCRC1 and UQCRC2) and 6 low-molecular weight proteins (UQCRH/QCR6, UQCRB/QCR7, UQCRQ/QCR8, UQCR10/QCR9, UQCR11/QCR10 and a cleavage product of UQCRFS1). This cytochrome bc1 complex then forms a dimer. It depends on heme b as a cofactor.

It is found in the mitochondrion inner membrane. Its function is as follows. Component of the ubiquinol-cytochrome c reductase complex (complex III or cytochrome b-c1 complex) that is part of the mitochondrial respiratory chain. The b-c1 complex mediates electron transfer from ubiquinol to cytochrome c. Contributes to the generation of a proton gradient across the mitochondrial membrane that is then used for ATP synthesis. The sequence is that of Cytochrome b (MT-CYB) from Anoura caudifer (Hairy-legged long-tongued bat).